Reading from the N-terminus, the 164-residue chain is Putative glutamine amidotransferase-like protein RP713 (164 aa).

The 126-residue stretch at 39 to 164 (TIANPNSLFM…VITVKIIIYM (126 aa)) folds into the Glutamine amidotransferase type-1 domain.

The polypeptide is Putative glutamine amidotransferase-like protein RP713 (Rickettsia prowazekii (strain Madrid E)).